The sequence spans 238 residues: Sugar fermentation stimulation protein homolog (238 aa).

It belongs to the SfsA family.

The chain is Sugar fermentation stimulation protein homolog from Vibrio vulnificus (strain YJ016).